Reading from the N-terminus, the 274-residue chain is Small nuclear ribonucleoprotein-associated protein B (274 aa).

A Sm domain is found at 5–85; it reads PKSSKMLQYI…VVSMSVEAPP (81 aa). A disordered region spans residues 148–274; the sequence is PGGGVPPPMG…PMGRGGFQRK (127 aa). Repeat 1 spans residues 162 to 171; the sequence is PPQGFPPGGP. The segment at 162-265 is 6 X 10 AA repeats of P-P-Q-G-F-P-P-G-G-P; that stretch reads PPQGFPPGGP…PPQGFPPGGP (104 aa). Low complexity predominate over residues 173-187; sequence PQGAFNNNPNNNNGG. 5 tandem repeats follow at residues 188–197, 204–213, 225–234, 241–250, and 256–265. The span at 216–226 shows a compositional bias: low complexity; the sequence is GPNLNNGNMPP. Positions 265–274 are enriched in gly residues; sequence PMGRGGFQRK.

It belongs to the snRNP SmB/SmN family.

It is found in the cytoplasm. The protein localises to the cytosol. The protein resides in the nucleus. Its function is as follows. Plays a role in pre-mRNA splicing as a core component of the spliceosomal U1, U2, U4 and U5 small nuclear ribonucleoproteins (snRNPs), the building blocks of the spliceosome. The sequence is that of Small nuclear ribonucleoprotein-associated protein B (snrpb) from Dictyostelium discoideum (Social amoeba).